Here is a 354-residue protein sequence, read N- to C-terminus: Trans-L-3-hydroxyproline dehydratase (354 aa).

Cys104 functions as the Proton acceptor in the catalytic mechanism. Residues 105–106 (GH), Asp269, and 274–275 (GS) each bind substrate.

The protein belongs to the proline racemase family. As to quaternary structure, homodimer.

It carries out the reaction trans-3-hydroxy-L-proline = 1-pyrroline-2-carboxylate + H2O. Catalyzes the dehydration of trans-3-hydroxy-L-proline to delta-1-pyrroline-2-carboxylate (Pyr2C). This is Trans-L-3-hydroxyproline dehydratase (L3hypdh) from Mus musculus (Mouse).